The sequence spans 551 residues: Delta-selinene synthase TPS7FN (551 aa).

(2E,6E)-farnesyl diphosphate is bound by residues R266, D303, D307, R444, and D447. The Mg(2+) site is built by D303 and D307. Positions 303-307 match the DDXXD motif motif; that stretch reads DDIYD. Positions 447, 451, and 455 each coordinate Mg(2+).

The protein belongs to the terpene synthase family. Tpsb subfamily. Requires Mg(2+) as cofactor. Mn(2+) serves as cofactor.

The enzyme catalyses (2E,6E)-farnesyl diphosphate = delta-selinene + diphosphate. The catalysed reaction is (2E)-geranyl diphosphate = beta-myrcene + diphosphate. It carries out the reaction (2E)-geranyl diphosphate = (4S)-limonene + diphosphate. It catalyses the reaction (2E,6E)-farnesyl diphosphate + H2O = selina-6-en-4-ol + diphosphate. The protein operates within secondary metabolite biosynthesis; terpenoid biosynthesis. In terms of biological role, involved in sesquiterpene olefins biosynthesis, constituants of cannabinoids and terpenoids-rich resins. Catalyzes mainly the conversion of (2E)-farnesyl diphosphate to delta-selinene, and also produces minor products such as selina-6-en-4-ol. Can also use (2E)-geranyl diphosphate as substrate with low efficiency, producing minor amounts of myrcene and limonene. This chain is Delta-selinene synthase TPS7FN, found in Cannabis sativa (Hemp).